The chain runs to 493 residues: Neisserial heparin binding antigen (493 aa).

Positions 1–22 (MKEMMMFKRSVIAMACIFALSA) are cleaved as a signal peptide. Residue C23 is the site of N-palmitoyl cysteine attachment. The S-diacylglycerol cysteine moiety is linked to residue C23. The interval 27–206 (GGGSPDVKSA…NPAPANGGSN (180 aa)) is disordered. The segment covering 48 to 58 (SEKETEAKEDA) has biased composition (basic and acidic residues). Low complexity predominate over residues 59–75 (PQAGSQGQGAPSAQGSQ). Composition is skewed to polar residues over residues 106-123 (DMPQ…NHTP) and 132-147 (MENQ…QPAN). Positions 165–188 (AGGQNAGNTAAQGANQAGNNQAAG) are enriched in low complexity. The short motif at 301 to 311 (RFRRSARSRRS) is the Arg-rich motif element.

The protein belongs to the NHBA family. As to quaternary structure, the C-terminal beta-barrel forms a monomer. Post-translationally, cleaved in vivo by the Neisserial phase-variable autotransporter/serine protease NalP to give 2 fragments. The N-terminus remains in the cell outer membrane while the C-terminus (beginning on Ser-298) is soluble; this soluble fragment is called C2. Cleaved in vitro by human lactoferrin (LTF, between Arg-310 and Ser-311), this fragment is called C1. Recombinant and cell surface protein is cleaved by human saliva kallikrein (KLK1) between Ser-308 and Arg-309; in saliva kallikrein is more active on NHBA than lactoferrin. Human plasma kallikrein (KLKB1) cleaves in a similar manner to KLK1.

It is found in the cell outer membrane. Its function is as follows. A major human immunogenic protein detected in patients recovering from meningitidis, where it induces bactericidal antibodies. Binds human cells, heparin and heparan sulfate proteoglycan in vitro via the Arg-rich motif. Heparin-binding to this protein protects bacteria against killing by bactericidal antibodies (serum killing). The bacteria binds a number of human extracellular sialyated and/or sulfated glycans via this protein, including chondroitin sulfate, heparin and ganglioside GT3. Whole protein binds DNA. Plays a role in extracellular-DNA (eDNA) mediated biofilm formation. In some strains (including cc32 strain H44/76 but not cc11 strain B16B6) eDNA stimulates biofilm formation. When NHBA is not processed by NalP, biofilm formation increases. This is probably because the number of positively charged, NHBA- and IgA-derived DNA-binding peptides on the cell surface rises, resulting in increased DNA-binding peptides and increased biofilm formation. This is Neisserial heparin binding antigen from Neisseria meningitidis serogroup B / serotype 15 (strain H44/76).